Here is a 349-residue protein sequence, read N- to C-terminus: tRNA pseudouridine synthase D (349 aa).

Phe-27 contacts substrate. The Nucleophile role is filled by Asp-80. Asn-129 lines the substrate pocket. One can recognise a TRUD domain in the interval 155 to 303 (GVPNYFGAQR…VEASRRAMLL (149 aa)). Phe-329 is a binding site for substrate.

Belongs to the pseudouridine synthase TruD family.

The catalysed reaction is uridine(13) in tRNA = pseudouridine(13) in tRNA. Responsible for synthesis of pseudouridine from uracil-13 in transfer RNAs. The protein is tRNA pseudouridine synthase D of Salmonella dublin (strain CT_02021853).